The primary structure comprises 562 residues: Oligo-1,6-glucosidase (562 aa).

Ca(2+)-binding residues include Asp21, Asn23, Asp25, and Asp29. Asp199 serves as the catalytic Nucleophile. Glu256 (proton donor) is an active-site residue.

Belongs to the glycosyl hydrolase 13 family.

It localises to the cytoplasm. It carries out the reaction Hydrolysis of (1-&gt;6)-alpha-D-glucosidic linkages in some oligosaccharides produced from starch and glycogen by alpha-amylase, and in isomaltose.. The protein is Oligo-1,6-glucosidase (malL) of Parageobacillus thermoglucosidasius (Geobacillus thermoglucosidasius).